A 130-amino-acid polypeptide reads, in one-letter code: Metastasis-suppressor KiSS-1 (130 aa).

An N-terminal signal peptide occupies residues 1–19; it reads MISMASWQLLLLLCVATYG. Residues 49 to 82 are disordered; the sequence is KESRYAESKPGSAGLRARRSSPCPPVEGPAGRQR. A disulfide bond links C71 and C85. The residue at position 110 (Y110) is a Phosphotyrosine. The interval 110–119 is essential for receptor binding and receptor activation; sequence YNWNSFGLRY. Position 119 is a tyrosine amide (Y119).

It belongs to the KISS1 family. As to expression, weak in all tissue types with highest levels in lung and 15- 17-day embryos. Expressed in areas of the hypothalamus implicated in the neuroendocrine regulation of gonadotropin secretion, including the anteroventral periventricular nucleus, the periventricular nucleus, and the arcuate nucleus.

The protein localises to the secreted. In terms of biological role, metastasis suppressor protein. May regulate events downstream of cell-matrix adhesion, perhaps involving cytoskeletal reorganization. Generates a C-terminally amidated peptide, metastin which functions as the endogenous ligand of the G-protein coupled receptor GPR54. Activation of the receptor inhibits cell proliferation and cell migration, key characteristics of tumor metastasis. The receptor is also essential for normal gonadotropin-released hormone physiology and for puberty. The hypothalamic KiSS1/GPR54 system is a pivotal factor in central regulation of the gonadotropic axis at puberty and in adulthood. Intracerebroventricular administration induces an increase in serum LH and FSH levels in prepubertal male and female as well as in adult animals. The protein is Metastasis-suppressor KiSS-1 (Kiss1) of Mus musculus (Mouse).